Consider the following 489-residue polypeptide: Valine--tRNA ligase (489 aa).

Residues 482–486 (KMSKS) carry the 'KMSKS' region motif. Lysine 485 contacts ATP.

Belongs to the class-I aminoacyl-tRNA synthetase family.

The enzyme catalyses tRNA(Val) + L-valine + ATP = L-valyl-tRNA(Val) + AMP + diphosphate. The chain is Valine--tRNA ligase (VALS) from Trichomonas vaginalis.